Here is a 478-residue protein sequence, read N- to C-terminus: Phosphatidylinositol 4-kinase type 2-alpha (478 aa).

Methionine 1 is modified (N-acetylmethionine). A disordered region spans residues 1-57; sequence MDETSPLVSPERAQPPEYTFPSVSGAHFPQVPGGAVRVAAAGSGPSPPCSPGHDRER. Phosphoserine is present on residues serine 5, serine 9, serine 43, serine 46, and serine 50. Positions 31–44 are enriched in low complexity; sequence VPGGAVRVAAAGSG. The PI3K/PI4K catalytic domain maps to 123 to 452; the sequence is SIYPERIYQG…VQMPPVIVET (330 aa). The segment at 129–135 is G-loop; that stretch reads IYQGSSG. ATP-binding positions include 130–136 and lysine 151; that span reads YQGSSGS. Residues 156–158 are important for substrate binding; that stretch reads EPY. The interval 164-177 is important for interaction with membranes; it reads KWTKWLQKLCCPCC. 4 S-palmitoyl cysteine lipidation sites follow: cysteine 173, cysteine 174, cysteine 176, and cysteine 177. Residue 260–263 participates in ATP binding; the sequence is QLFV. The interval 267–275 is important for interaction with membranes; that stretch reads KDADYWLRR. The interval 304-312 is catalytic loop; it reads RNTDRGNDN. An activation loop region spans residues 343–363; sequence AIDNGLAFPLKHPDSWRAYPF. Aspartate 345 is an ATP binding site. An important for interaction with membranes region spans residues 358-367; sequence WRAYPFYWAW. Residue serine 461 is modified to Phosphoserine.

The protein belongs to the PI3/PI4-kinase family. Type II PI4K subfamily. As to quaternary structure, associates with the BLOC-1 and the AP-3 complexes; the BLOC-1 complex is required for optimal binding of PI4K2A to the AP-3 complex. Interacts with BLOC1S5 and DTNBP1. Interacts with FOS; this interaction may enhance phosphatidylinositol phosphorylation activity. Interacts with ITCH. Interacts with ATG9A. Post-translationally, ubiquitinated by ITCH; this does not lead to proteasomal degradation. In terms of processing, palmitoylated. Palmitoylated by ZDHHC3 and ZDHHC7 in the CCPCC motif. Palmitoylation is cholesterol-dependent, and required for TGN localization. Detected in adult brain, especially in neurons in the cerebellum, brain cortex, dorsal root ganglion and spinal cord (at protein level).

It localises to the golgi apparatus. The protein localises to the trans-Golgi network membrane. The protein resides in the membrane raft. Its subcellular location is the endosome. It is found in the endosome membrane. It localises to the cytoplasmic vesicle. The protein localises to the cell projection. The protein resides in the dendrite. Its subcellular location is the presynaptic cell membrane. It is found in the synapse. It localises to the synaptosome. The protein localises to the mitochondrion. The protein resides in the membrane. Its subcellular location is the cell membrane. It is found in the perikaryon. It localises to the neuron projection. The enzyme catalyses a 1,2-diacyl-sn-glycero-3-phospho-(1D-myo-inositol) + ATP = a 1,2-diacyl-sn-glycero-3-phospho-(1D-myo-inositol 4-phosphate) + ADP + H(+). In terms of biological role, membrane-bound phosphatidylinositol-4 kinase (PI4-kinase) that catalyzes the phosphorylation of phosphatidylinositol (PI) to phosphatidylinositol 4-phosphate (PI4P), a lipid that plays important roles in endocytosis, Golgi function, protein sorting and membrane trafficking and is required for prolonged survival of neurons. Besides, phosphorylation of phosphatidylinositol (PI) to phosphatidylinositol 4-phosphate (PI4P) is the first committed step in the generation of phosphatidylinositol 4,5-bisphosphate (PIP2), a precursor of the second messenger inositol 1,4,5-trisphosphate (InsP3). In Rattus norvegicus (Rat), this protein is Phosphatidylinositol 4-kinase type 2-alpha (Pi4k2a).